The chain runs to 131 residues: Inner membrane protein YecN (131 aa).

The Cytoplasmic segment spans residues 1–107 (MVSALYAVLS…RWRRSGMSAT (107 aa)). The chain crosses the membrane as a helical span at residues 108-128 (WCALLLMVLANLWYMPWELVF). Residues 129–131 (SLR) are Periplasmic-facing.

The protein resides in the cell inner membrane. In Escherichia coli O6:H1 (strain CFT073 / ATCC 700928 / UPEC), this protein is Inner membrane protein YecN (yecN).